Consider the following 484-residue polypeptide: Sulfoacetaldehyde dehydrogenase (484 aa).

Residues 105-110 (LTPVTN), Gly-188, and Gly-206 contribute to the NAD(+) site. Cys-239 acts as the Nucleophile in catalysis. NAD(+) is bound by residues Glu-332 and Leu-412.

The protein belongs to the aldehyde dehydrogenase family.

The catalysed reaction is sulfoacetaldehyde + NAD(+) + CoA = sulfoacetyl-CoA + NADH + H(+). In terms of biological role, part of a variant of the sulfo-TK pathway, a D-sulfoquinovose degradation pathway that produces sulfoacetate. Catalyzes the oxidation of sulfoacetaldehyde (SA) to sulfoacetyl-coenzyme A (sulfoacetyl-CoA). Is highly specific for NAD(+), with only residual (1%) activity with NADP(+). Cannot use acetaldehyde. The sequence is that of Sulfoacetaldehyde dehydrogenase from Acholeplasma sp.